A 173-amino-acid chain; its full sequence is Shikimate kinase (173 aa).

14-19 (GAGKST) is an ATP binding site. Ser18 lines the Mg(2+) pocket. Positions 36, 60, and 82 each coordinate substrate. An ATP-binding site is contributed by Arg120. A substrate-binding site is contributed by Arg140. Gln157 serves as a coordination point for ATP.

The protein belongs to the shikimate kinase family. In terms of assembly, monomer. Mg(2+) serves as cofactor.

It is found in the cytoplasm. It carries out the reaction shikimate + ATP = 3-phosphoshikimate + ADP + H(+). The protein operates within metabolic intermediate biosynthesis; chorismate biosynthesis; chorismate from D-erythrose 4-phosphate and phosphoenolpyruvate: step 5/7. Functionally, catalyzes the specific phosphorylation of the 3-hydroxyl group of shikimic acid using ATP as a cosubstrate. The sequence is that of Shikimate kinase from Baumannia cicadellinicola subsp. Homalodisca coagulata.